The chain runs to 164 residues: RNA pyrophosphohydrolase (164 aa).

The Nudix hydrolase domain maps to 12–158 (RYRQCAGVML…KREVYRAVVK (147 aa)). The Nudix box motif lies at 47 to 68 (GGIDPGETQQEAAMRELEEETG).

It belongs to the Nudix hydrolase family. RppH subfamily. The cofactor is a divalent metal cation.

Its function is as follows. Accelerates the degradation of transcripts by removing pyrophosphate from the 5'-end of triphosphorylated RNA, leading to a more labile monophosphorylated state that can stimulate subsequent ribonuclease cleavage. This is RNA pyrophosphohydrolase from Erythrobacter litoralis (strain HTCC2594).